A 441-amino-acid polypeptide reads, in one-letter code: Ribosomal protein uS12 methylthiotransferase RimO (441 aa).

Residues 8–118 form the MTTase N-terminal domain; it reads PKIGFVSLGC…VLQHVHHYVP (111 aa). Residues Cys17, Cys53, Cys82, Cys150, Cys154, and Cys157 each coordinate [4Fe-4S] cluster. The Radical SAM core domain maps to 136-373; it reads LTPRHYAYLK…MQLQQQISAE (238 aa). One can recognise a TRAM domain in the interval 376-441; that stretch reads QEKVGREILV…DEYDLWGSRV (66 aa).

Belongs to the methylthiotransferase family. RimO subfamily. Requires [4Fe-4S] cluster as cofactor.

The protein resides in the cytoplasm. It catalyses the reaction L-aspartate(89)-[ribosomal protein uS12]-hydrogen + (sulfur carrier)-SH + AH2 + 2 S-adenosyl-L-methionine = 3-methylsulfanyl-L-aspartate(89)-[ribosomal protein uS12]-hydrogen + (sulfur carrier)-H + 5'-deoxyadenosine + L-methionine + A + S-adenosyl-L-homocysteine + 2 H(+). Functionally, catalyzes the methylthiolation of an aspartic acid residue of ribosomal protein uS12. The sequence is that of Ribosomal protein uS12 methylthiotransferase RimO from Salmonella paratyphi A (strain ATCC 9150 / SARB42).